Reading from the N-terminus, the 25-residue chain is Xenoposin precursor fragment BM1 (25 aa).

Expressed by the skin glands.

The protein resides in the secreted. Functionally, antimicrobial peptide. This Xenopus boumbaensis (Mawa clawed frog) protein is Xenoposin precursor fragment BM1.